We begin with the raw amino-acid sequence, 474 residues long: Aspartate ammonia-lyase (474 aa).

Residues Thr-105, Ser-144, Thr-145, Asn-146, and Thr-191 each coordinate L-aspartate. The interval 322 to 331 (GSSIMPGKVN) is SS loop. Catalysis depends on Ser-323, which acts as the Proton acceptor. Positions 324 and 329 each coordinate L-aspartate.

It belongs to the class-II fumarase/aspartase family. Aspartase subfamily. As to quaternary structure, homotetramer.

The enzyme catalyses L-aspartate = fumarate + NH4(+). Its function is as follows. Lyase involved in the degradation of canavanine, the delta-oxa-analog of arginine, allowing growth on canavanine as sole nitrogen and carbon source. Probably catalyzes the conversion of L-aspartate to fumarate and ammonia. The chain is Aspartate ammonia-lyase from Pseudomonas canavaninivorans.